A 182-amino-acid chain; its full sequence is Ribosome-recycling factor (182 aa).

This sequence belongs to the RRF family.

The protein resides in the cytoplasm. Its function is as follows. Responsible for the release of ribosomes from messenger RNA at the termination of protein biosynthesis. May increase the efficiency of translation by recycling ribosomes from one round of translation to another. The polypeptide is Ribosome-recycling factor (Prochlorococcus marinus (strain MIT 9515)).